The chain runs to 415 residues: Imidazolonepropionase (415 aa).

Histidine 83 and histidine 85 together coordinate Fe(3+). The Zn(2+) site is built by histidine 83 and histidine 85. 4-imidazolone-5-propanoate contacts are provided by arginine 92, tyrosine 155, and histidine 188. Tyrosine 155 provides a ligand contact to N-formimidoyl-L-glutamate. Histidine 250 serves as a coordination point for Fe(3+). Residue histidine 250 coordinates Zn(2+). A 4-imidazolone-5-propanoate-binding site is contributed by glutamine 253. Fe(3+) is bound at residue aspartate 324. Aspartate 324 is a Zn(2+) binding site. Asparagine 326 and glycine 328 together coordinate N-formimidoyl-L-glutamate. Residue serine 329 coordinates 4-imidazolone-5-propanoate.

Belongs to the metallo-dependent hydrolases superfamily. HutI family. Zn(2+) is required as a cofactor. The cofactor is Fe(3+).

Its subcellular location is the cytoplasm. It carries out the reaction 4-imidazolone-5-propanoate + H2O = N-formimidoyl-L-glutamate. The protein operates within amino-acid degradation; L-histidine degradation into L-glutamate; N-formimidoyl-L-glutamate from L-histidine: step 3/3. Functionally, catalyzes the hydrolytic cleavage of the carbon-nitrogen bond in imidazolone-5-propanoate to yield N-formimidoyl-L-glutamate. It is the third step in the universal histidine degradation pathway. In Rubrobacter xylanophilus (strain DSM 9941 / JCM 11954 / NBRC 16129 / PRD-1), this protein is Imidazolonepropionase.